The primary structure comprises 447 residues: Phosphoglucosamine mutase (447 aa).

Ser-88 acts as the Phosphoserine intermediate in catalysis. The Mg(2+) site is built by Ser-88, Asp-231, Asp-233, and Asp-235. A Phosphoserine modification is found at Ser-88.

Belongs to the phosphohexose mutase family. Mg(2+) serves as cofactor. Activated by phosphorylation.

The catalysed reaction is alpha-D-glucosamine 1-phosphate = D-glucosamine 6-phosphate. In terms of biological role, catalyzes the conversion of glucosamine-6-phosphate to glucosamine-1-phosphate. This chain is Phosphoglucosamine mutase, found in Methanococcus maripaludis (strain C7 / ATCC BAA-1331).